The primary structure comprises 178 residues: Arginine repressor (178 aa).

Residues 1–21 form a disordered region; that stretch reads MSQAQENEHAGPAVPQTRTAR.

It belongs to the ArgR family.

The protein localises to the cytoplasm. It participates in amino-acid biosynthesis; L-arginine biosynthesis [regulation]. Regulates arginine biosynthesis genes. This Streptomyces avermitilis (strain ATCC 31267 / DSM 46492 / JCM 5070 / NBRC 14893 / NCIMB 12804 / NRRL 8165 / MA-4680) protein is Arginine repressor.